The chain runs to 159 residues: U1 small nuclear ribonucleoprotein C (159 aa).

A Matrin-type zinc finger spans residues 4–36; sequence FYCDYCDTYLTHDSPSVRKTHCSGRKHKENVKD. Disordered regions lie at residues 63-95 and 139-159; these read PPTP…MPAP and MRPP…RPDR. A compositionally biased stretch (pro residues) spans 77-95; the sequence is IPPPPSMGGPPRPGMMPAP.

Belongs to the U1 small nuclear ribonucleoprotein C family. Component of the U1 snRNP. The U1 snRNP is composed of the U1 snRNA and the 7 core Sm proteins snrpb, snrpd1, snrpd2, snrpd3, snrpe, snrpf and snrpg that assemble in a heptameric protein ring on the Sm site of the small nuclear RNA to form the core snRNP, and at least 3 U1 snRNP-specific proteins snrnp70/U1-70K, snrpa/U1-A and snrpc/U1-C. snrpc/U1-C interacts with U1 snRNA and the 5' splice-site region of the pre-mRNA.

The protein resides in the nucleus. Its function is as follows. Component of the spliceosomal U1 snRNP, which is essential for recognition of the pre-mRNA 5' splice-site and the subsequent assembly of the spliceosome. snrpc/U1-C is directly involved in initial 5' splice-site recognition for both constitutive and regulated alternative splicing. The interaction with the 5' splice-site seems to precede base-pairing between the pre-mRNA and the U1 snRNA. Stimulates commitment or early (E) complex formation by stabilizing the base pairing of the 5' end of the U1 snRNA and the 5' splice-site region. The polypeptide is U1 small nuclear ribonucleoprotein C (Xenopus tropicalis (Western clawed frog)).